Here is a 294-residue protein sequence, read N- to C-terminus: Glycine--tRNA ligase alpha subunit (294 aa).

It belongs to the class-II aminoacyl-tRNA synthetase family. As to quaternary structure, tetramer of two alpha and two beta subunits.

The protein resides in the cytoplasm. It carries out the reaction tRNA(Gly) + glycine + ATP = glycyl-tRNA(Gly) + AMP + diphosphate. The protein is Glycine--tRNA ligase alpha subunit of Nostoc sp. (strain PCC 7120 / SAG 25.82 / UTEX 2576).